Consider the following 88-residue polypeptide: Small ribosomal subunit protein uS17c (88 aa).

Belongs to the universal ribosomal protein uS17 family. Part of the 30S ribosomal subunit.

It is found in the plastid. It localises to the cyanelle. One of the primary rRNA binding proteins, it binds specifically to the 5'-end of 16S ribosomal RNA. This is Small ribosomal subunit protein uS17c (rps17) from Cyanophora paradoxa.